Reading from the N-terminus, the 157-residue chain is UPF0127 protein TK1120 (157 aa).

Belongs to the UPF0127 family.

The protein is UPF0127 protein TK1120 of Thermococcus kodakarensis (strain ATCC BAA-918 / JCM 12380 / KOD1) (Pyrococcus kodakaraensis (strain KOD1)).